Reading from the N-terminus, the 102-residue chain is UPF0058 protein MTH_224 (102 aa).

The protein belongs to the UPF0058 family.

This Methanothermobacter thermautotrophicus (strain ATCC 29096 / DSM 1053 / JCM 10044 / NBRC 100330 / Delta H) (Methanobacterium thermoautotrophicum) protein is UPF0058 protein MTH_224.